Here is a 267-residue protein sequence, read N- to C-terminus: Syntaxin-72 (267 aa).

Residues 1 to 244 lie on the Cytoplasmic side of the membrane; that stretch reads MPVIDIIFRV…QLVQMRSSRN (244 aa). Residues 53–87 are a coiled coil; it reads KAELASTEKNRAAAVAMNAEVRRTKARLAEDVVKL. The 63-residue stretch at 173–235 folds into the t-SNARE coiled-coil homology domain; it reads EMRRKKQDEG…KNTNVRLKKQ (63 aa). Residues 245–265 traverse the membrane as a helical; Anchor for type IV membrane protein segment; sequence FCIDIILLCVILGIVSYIYNA. At 266-267 the chain is on the vesicular side; it reads LN.

The protein belongs to the syntaxin family. In terms of assembly, part of the t-SNARE complex. Expressed in root, leaf, stem, flower and silique.

The protein localises to the membrane. Functionally, vesicle trafficking protein that functions in the secretory pathway. The sequence is that of Syntaxin-72 (SYP72) from Arabidopsis thaliana (Mouse-ear cress).